The sequence spans 1250 residues: Immunoglobulin superfamily DCC subclass member 4 (1250 aa).

A signal peptide spans 1-24 (MARGDAGRGRGLLALTFCLLAARG). The Extracellular segment spans residues 25-957 (ELLLPQETTV…SDSLDMHSVT (933 aa)). 4 consecutive Ig-like C2-type domains span residues 29–137 (PQET…TAVV), 143–229 (ADFS…ALLS), 242–330 (QDVV…AELR), and 335–421 (PAIT…ASLA). A disulfide bridge connects residues Cys57 and Cys121. N-linked (GlcNAc...) asparagine glycosylation is found at Asn90, Asn102, and Asn157. Cys164 and Cys212 form a disulfide bridge. Asn252 is a glycosylation site (N-linked (GlcNAc...) asparagine). Intrachain disulfides connect Cys265–Cys312 and Cys356–Cys405. Fibronectin type-III domains lie at 431 to 525 (APTR…TLDD), 527 to 623 (PSAA…TPSM), 632 to 741 (APAE…APAP), 752 to 845 (PPAH…TLPD), and 850 to 945 (PPSD…TLQE). Asn582 carries N-linked (GlcNAc...) asparagine glycosylation. The helical transmembrane segment at 958–978 (GIIVGVCLGLLCLLACMCAGL) threads the bilayer. Topologically, residues 979-1250 (RRSPHRESLP…LPRSPVSSSA (272 aa)) are cytoplasmic. A Phosphothreonine modification is found at Thr995. Disordered regions lie at residues 1140–1175 (SASNGNPDLHLQDLEPEDPLPPEAPDLISGVGDPGQ) and 1215–1250 (PGEVLEETPGDSCQLKSPCPLGASPGLPRSPVSSSA).

The protein belongs to the immunoglobulin superfamily. DCC family.

The protein localises to the cell membrane. The polypeptide is Immunoglobulin superfamily DCC subclass member 4 (IGDCC4) (Homo sapiens (Human)).